A 657-amino-acid polypeptide reads, in one-letter code: Endoplasmic reticulum mannosyl-oligosaccharide 1,2-alpha-mannosidase (657 aa).

The Cytoplasmic segment spans residues 1-49 (MYPPPPAPAPHRDFISVTLSLGESYDNSKSRRRRSCWRKWKQLSRLQRN). A helical transmembrane segment spans residues 50-70 (VILFVLGFLILCGFLYSLQVS). Over 71-657 (DQWKALSGSR…AHPLPIWSPA (587 aa)) the chain is Lumenal. A Phosphoserine modification is found at S101. A disordered region spans residues 118–157 (HLRRGPPHLQIRPPNTVSKDGMQDDAKEREAALGKAQQEE). The span at 138–157 (GMQDDAKEREAALGKAQQEE) shows a compositional bias: basic and acidic residues. E288 serves as the catalytic Proton donor. D421 is a catalytic residue. A disulfide bond links C485 and C514. Residue E528 is the Proton donor of the active site. E557 is a catalytic residue. Residue T646 participates in Ca(2+) binding.

The protein belongs to the glycosyl hydrolase 47 family. Ca(2+) is required as a cofactor.

It localises to the endoplasmic reticulum membrane. It carries out the reaction N(4)-(alpha-D-Man-(1-&gt;2)-alpha-D-Man-(1-&gt;2)-alpha-D-Man-(1-&gt;3)-[alpha-D-Man-(1-&gt;2)-alpha-D-Man-(1-&gt;3)-[alpha-D-Man-(1-&gt;2)-alpha-D-Man-(1-&gt;6)]-alpha-D-Man-(1-&gt;6)]-beta-D-Man-(1-&gt;4)-beta-D-GlcNAc-(1-&gt;4)-beta-D-GlcNAc)-L-asparaginyl-[protein] (N-glucan mannose isomer 9A1,2,3B1,2,3) + 4 H2O = N(4)-(alpha-D-Man-(1-&gt;3)-[alpha-D-Man-(1-&gt;3)-[alpha-D-Man-(1-&gt;6)]-alpha-D-Man-(1-&gt;6)]-beta-D-Man-(1-&gt;4)-beta-D-GlcNAc-(1-&gt;4)-beta-D-GlcNAc)-L-asparaginyl-[protein] (N-glucan mannose isomer 5A1,2) + 4 beta-D-mannose. The enzyme catalyses N(4)-(alpha-D-Man-(1-&gt;2)-alpha-D-Man-(1-&gt;2)-alpha-D-Man-(1-&gt;3)-[alpha-D-Man-(1-&gt;3)-[alpha-D-Man-(1-&gt;2)-alpha-D-Man-(1-&gt;6)]-alpha-D-Man-(1-&gt;6)]-beta-D-Man-(1-&gt;4)-beta-D-GlcNAc-(1-&gt;4)-beta-D-GlcNAc)-L-asparaginyl-[protein] (N-glucan mannose isomer 8A1,2,3B1,3) + 3 H2O = N(4)-(alpha-D-Man-(1-&gt;3)-[alpha-D-Man-(1-&gt;3)-[alpha-D-Man-(1-&gt;6)]-alpha-D-Man-(1-&gt;6)]-beta-D-Man-(1-&gt;4)-beta-D-GlcNAc-(1-&gt;4)-beta-D-GlcNAc)-L-asparaginyl-[protein] (N-glucan mannose isomer 5A1,2) + 3 beta-D-mannose. It functions in the pathway protein modification; protein glycosylation. Involved in glycoprotein quality control targeting of misfolded glycoproteins for degradation. It primarily trims a single alpha-1,2-linked mannose residue from Man(9)GlcNAc(2) to produce Man(8)GlcNAc(2), but at high enzyme concentrations, as found in the ER quality control compartment (ERQC), it further trims the carbohydrates to Man(5-6)GlcNAc(2). In Rattus norvegicus (Rat), this protein is Endoplasmic reticulum mannosyl-oligosaccharide 1,2-alpha-mannosidase (Man1b1).